A 575-amino-acid chain; its full sequence is Major outer membrane protein MspA (575 aa).

Positions 1-19 (MKKALVFFVALAMIGSVFA) are cleaved as a signal peptide.

The protein resides in the cell outer membrane. Major component of the outer membrane sheath. This is Major outer membrane protein MspA (mspA) from Treponema maltophilum.